The sequence spans 488 residues: N-succinylglutamate 5-semialdehyde dehydrogenase (488 aa).

Position 221 to 226 (221 to 226 (GSSRTG)) interacts with NAD(+). Residues Glu244 and Cys278 contribute to the active site.

It belongs to the aldehyde dehydrogenase family. AstD subfamily.

It catalyses the reaction N-succinyl-L-glutamate 5-semialdehyde + NAD(+) + H2O = N-succinyl-L-glutamate + NADH + 2 H(+). It participates in amino-acid degradation; L-arginine degradation via AST pathway; L-glutamate and succinate from L-arginine: step 4/5. Functionally, catalyzes the NAD-dependent reduction of succinylglutamate semialdehyde into succinylglutamate. The protein is N-succinylglutamate 5-semialdehyde dehydrogenase of Pseudomonas syringae pv. tomato (strain ATCC BAA-871 / DC3000).